Consider the following 217-residue polypeptide: tRNA (guanine-N(7)-)-methyltransferase (217 aa).

S-adenosyl-L-methionine contacts are provided by glutamate 43, aspartate 68, asparagine 101, and asparagine 123. Lysine 127 is a binding site for substrate. The interval 129–134 (RHNKRR) is interaction with RNA. Residues aspartate 159 and 196-199 (TEYE) contribute to the substrate site.

It belongs to the class I-like SAM-binding methyltransferase superfamily. TrmB family.

The catalysed reaction is guanosine(46) in tRNA + S-adenosyl-L-methionine = N(7)-methylguanosine(46) in tRNA + S-adenosyl-L-homocysteine. It participates in tRNA modification; N(7)-methylguanine-tRNA biosynthesis. In terms of biological role, catalyzes the formation of N(7)-methylguanine at position 46 (m7G46) in tRNA. The sequence is that of tRNA (guanine-N(7)-)-methyltransferase from Clostridium botulinum (strain 657 / Type Ba4).